The chain runs to 279 residues: MAESFVRLEHVFYKYEDTEKYAVKDVSISAQKGEWVALVGHNGSGKSTIAKLLNGLLFPEDGLIKIGHFVLSEKNIWDIRRQVGMVFQNPDNQFVGATVQDDVAFGLENHGVPHDTMVERVESALNEVGMQSYALHEPARLSGGQKQRVAIAGVLALQPDVIILDEATSMLDPRGRAEVMETIRIMREQEDITVISITHDLDEVLFADRVIVMNNGEVHSEGTPQEIFEQADAMREIGLGVPFIIELQEKLVAGGFETGSTVLSEGALLDQLWKLNSNN.

An ABC transporter domain is found at 6 to 240; sequence VRLEHVFYKY…ADAMREIGLG (235 aa). 40-47 lines the ATP pocket; that stretch reads GHNGSGKS.

This sequence belongs to the ABC transporter superfamily. Energy-coupling factor EcfA family. Forms a stable energy-coupling factor (ECF) transporter complex composed of 2 membrane-embedded substrate-binding proteins (S component), 2 ATP-binding proteins (A component) and 2 transmembrane proteins (T component).

It localises to the cell membrane. ATP-binding (A) component of a common energy-coupling factor (ECF) ABC-transporter complex. Unlike classic ABC transporters this ECF transporter provides the energy necessary to transport a number of different substrates. The polypeptide is Energy-coupling factor transporter ATP-binding protein EcfA1 (Listeria monocytogenes serotype 4b (strain F2365)).